Here is a 952-residue protein sequence, read N- to C-terminus: Chaperone protein ClpC2, chloroplastic (952 aa).

The N-terminal 45 residues, M1 to Q45, are a transit peptide targeting the chloroplast. Residues F115 to E257 form the Clp R domain. Repeat regions lie at residues F118–G183 and F193–E257. The interval L278–P525 is i. G323–T330 contributes to the ATP binding site. Positions E532 to E567 constitute a UVR domain. The interval V592–S783 is II. G666 to S673 serves as a coordination point for ATP.

Belongs to the ClpA/ClpB family. ClpC subfamily. In terms of assembly, homodimer and homohexamer. Hexamerization upon addition of ATP. Interacts with CLPT1. Interacts with CLPS1. Stably associated with the import machinery. Interacts with CLPF. It depends on Mg(2+) as a cofactor. In terms of tissue distribution, expressed at low levels in roots and inflorescences. Expressed at very low levels in rosette leaves. Expressed in photosynthetic green tissues with high levels in young, developing leaf tissues.

It localises to the plastid. The protein localises to the chloroplast stroma. The protein resides in the chloroplast membrane. It carries out the reaction ATP + H2O = ADP + phosphate + H(+). Molecular chaperone. May act as a suppressor of FtsH-mediated thylakoid membrane biogenesis and may enhance photoinhibition. Seems not involved in chloroplastic protein import. Probable component of the TIC-associated stromal import motor involved in inner membrane translocation. Has an ATPase activity, but no ADPase activity. Interacts with transit peptides with a positional preference. Localization of the signal sequence at the N-terminal end of a protein seems mandatory for interaction to take place. The polypeptide is Chaperone protein ClpC2, chloroplastic (Arabidopsis thaliana (Mouse-ear cress)).